Reading from the N-terminus, the 85-residue chain is Large ribosomal subunit protein bL27 (85 aa).

Residues 1–24 (MAHKKGVGSSRNGRDSDGQRLGCK) are disordered.

Belongs to the bacterial ribosomal protein bL27 family.

The sequence is that of Large ribosomal subunit protein bL27 from Geotalea daltonii (strain DSM 22248 / JCM 15807 / FRC-32) (Geobacter daltonii).